A 469-amino-acid polypeptide reads, in one-letter code: Dynein axonemal assembly factor 3 (469 aa).

The segment at 313–356 (RSPLNEDPPNTSSSCCQSTESRKTEENSQSDPSASQTQPVEHSP) is disordered. Composition is skewed to polar residues over residues 320–331 (PPNTSSSCCQST) and 339–356 (NSQSDPSASQTQPVEHSP).

It belongs to the DNAAF3 family. Mainly expressed in cell types that express axonemal dyneins.

It is found in the cytoplasm. Its subcellular location is the dynein axonemal particle. Functionally, required for the assembly of axonemal inner and outer dynein arms. Involved in preassembly of dyneins into complexes before their transport into cilia. This chain is Dynein axonemal assembly factor 3 (dnaaf3), found in Danio rerio (Zebrafish).